Here is an 818-residue protein sequence, read N- to C-terminus: SIT4-associating protein SAP4 (818 aa).

Disordered stretches follow at residues 33–60 (ETSS…RDRS) and 499–526 (TSNT…KNIK). A compositionally biased stretch (low complexity) spans 509-518 (NNDSNDSNDN).

This sequence belongs to the SAPS family. Hyperphosphorylated in the absence of SIT4.

Associates with the SIT4 phosphatase in a cell cycle dependent manner. May be directly or indirectly involved in SIT4-dependent functions in budding and in normal G1 cyclin expression. This chain is SIT4-associating protein SAP4 (SAP4), found in Saccharomyces cerevisiae (strain ATCC 204508 / S288c) (Baker's yeast).